The following is a 779-amino-acid chain: Cell division control protein 4 (779 aa).

The tract at residues 39–80 is disordered; sequence AGTHRNSSTAKTVETEDGEEDIDEYQRKRAAGSGESTPERSD. The Nuclear localization signal motif lies at 82–85; sequence KRVK. Ser104 is modified (phosphoserine). Residues 272 to 319 form the F-box domain; sequence RDLITSLPFEISLKIFNYLQFEDIINSLGVSQNWNKIIRKSTSLWKKL. 7 WD repeats span residues 380–408, 420–449, 461–493, 528–556, 568–598, 630–658, and 669–698; these read HMTS…RVYD, GHDG…RVWD, GHNS…HVWK, GHMA…IVWD, GHTD…RIWD, GHTA…RGWD, and HHTN…NIYN.

In terms of assembly, interacts with DCD53 and SKP1. Component of the SCF(CDC4) complex containing CDC53, SKP1, RBX1 and CDC4. CDC34. Interacts with CDC6 and CIC1. Interacts with SIC1; the interaction involves a SIC1 double phosphorylated motif (degron). Homodimerizes; the dimerization increases SIC1 ubiquitination in vitro.

It is found in the nucleus. Its pathway is protein modification; protein ubiquitination. Substrate recognition component of a SCF (SKP1-CUL1-F-box protein) E3 ubiquitin-protein ligase complex which mediates the ubiquitination and subsequent proteasomal degradation of target proteins. Recognizes and binds to phosphorylated target proteins. Directs ubiquitination of the phosphorylated CDK inhibitor SIC1. Involved in the degradation of CDC6 together with CDC34/UBC3 and CDC53, and in restricting the degradation of FAR1 to the nucleus. Is essential for initiation of DNA replication and separation of the spindle pole bodies to form the poles of the mitotic spindle. It also plays a role in bud development, fusion of zygotic nuclei after conjugation and various aspects of sporulation. Required for HTA1-HTB1 locus transcription activation. Required for G1/S and G2/M transition. This chain is Cell division control protein 4 (CDC4), found in Saccharomyces cerevisiae (strain ATCC 204508 / S288c) (Baker's yeast).